Here is a 399-residue protein sequence, read N- to C-terminus: Protein DDI1 homolog 2 (399 aa).

In terms of domain architecture, Ubiquitin-like spans 1 to 81; sequence MLLTVYCVRR…VILRQKENAD (81 aa). Positions 99 to 134 are disordered; the sequence is IAVPGTSNPQQRQLPRTQAQHSSPGEMASSPQGLDN. A compositionally biased stretch (polar residues) spans 103–131; the sequence is GTSNPQQRQLPRTQAQHSSPGEMASSPQG. A Phosphothreonine modification is found at Thr-104. Residues Ser-121, Ser-128, Ser-150, and Ser-194 each carry the phosphoserine modification. Residue Asp-252 is part of the active site. The Ubiquitin-binding signature appears at 376 to 395; it reads EEIADQELAEAIQKSAEDAE.

The protein belongs to the DDI1 family. Homodimer.

It localises to the cytoplasm. The protein localises to the cytosol. Its subcellular location is the chromosome. Its function is as follows. Aspartic protease that mediates the cleavage of NFE2L1/NRF1 at 'Leu-104', thereby promoting release of NFE2L1/NRF1 from the endoplasmic reticulum membrane. Ubiquitination of NFE2L1/NRF1 is a prerequisite for cleavage, suggesting that DDI2 specifically recognizes and binds ubiquitinated NFE2L1/NRF1. Seems to act as a proteasomal shuttle which links the proteasome and replication fork proteins like RTF2. Required, with DDI1, for cellular survival following replication stress. Together or redudantly with DDI1, removes RTF2 from stalled forks to allow cell cycle progression after replication stress and maintains genome integrity. The protein is Protein DDI1 homolog 2 of Mus musculus (Mouse).